A 565-amino-acid chain; its full sequence is Hemagglutinin-neuraminidase (565 aa).

The Intravirion portion of the chain corresponds to 1–19; sequence MVAEDAPVRGTCRVLFRTT. Residues 20–40 traverse the membrane as a helical segment; the sequence is TLLFLCTLLSLSISILYESLI. Residues 41–565 are Virion surface-facing; it reads TQNQIMSQAG…VPFIRQVTLS (525 aa). Residues Asn110 and Asn139 are each glycosylated (N-linked (GlcNAc...) asparagine; by host). 3 cysteine pairs are disulfide-bonded: Cys161–Cys185, Cys175–Cys236, and Cys227–Cys240. The segment at 223–228 is involved in neuraminidase activity; it reads NRKSCS. Asn267 carries N-linked (GlcNAc...) asparagine; by host glycosylation. 3 disulfide bridges follow: Cys333/Cys454, Cys365/Cys375, and Cys448/Cys458. N-linked (GlcNAc...) asparagine; by host glycosylation is present at Asn504. Cys528 and Cys539 are disulfide-bonded.

This sequence belongs to the paramyxoviruses hemagglutinin-neuraminidase family. Homotetramer; composed of disulfide-linked homodimers. Interacts with F protein trimer.

Its subcellular location is the virion membrane. It localises to the host cell membrane. It catalyses the reaction Hydrolysis of alpha-(2-&gt;3)-, alpha-(2-&gt;6)-, alpha-(2-&gt;8)- glycosidic linkages of terminal sialic acid residues in oligosaccharides, glycoproteins, glycolipids, colominic acid and synthetic substrates.. Functionally, attaches the virus to sialic acid-containing cell receptors and thereby initiating infection. Binding of HN protein to the receptor induces a conformational change that allows the F protein to trigger virion/cell membranes fusion. In terms of biological role, neuraminidase activity ensures the efficient spread of the virus by dissociating the mature virions from the neuraminic acid containing glycoproteins. This Canis lupus familiaris (Dog) protein is Hemagglutinin-neuraminidase (HN).